The primary structure comprises 427 residues: ATP-dependent RNA helicase DDX39A (427 aa).

Residues 1–19 (MAEQDVENDLLDYDEEEEP) are compositionally biased toward acidic residues. Residues 1–34 (MAEQDVENDLLDYDEEEEPQAPQESTPAPPKKDI) form a disordered region. An N-acetylalanine modification is found at Ala2. A Glycyl lysine isopeptide (Lys-Gly) (interchain with G-Cter in SUMO2) cross-link involves residue Lys31. An N6-acetyllysine; alternate modification is found at Lys35. Lys35 is covalently cross-linked (Glycyl lysine isopeptide (Lys-Gly) (interchain with G-Cter in SUMO2); alternate). Position 37 is a phosphoserine (Ser37). The Q motif signature appears at 44–72 (SGFRDFLLKPELLRAIVDCGFEHPSEVQH). The Helicase ATP-binding domain maps to 75–248 (IPQAILGMDV…RKFMQDPMEV (174 aa)). 88-95 (AKSGMGKT) lines the ATP pocket. Glycyl lysine isopeptide (Lys-Gly) (interchain with G-Cter in SUMO2) cross-links involve residues Lys154 and Lys162. The residue at position 171 (Thr171) is a Phosphothreonine. The DECD box signature appears at 195-198 (DECD). Glycyl lysine isopeptide (Lys-Gly) (interchain with G-Cter in SUMO2) cross-links involve residues Lys240 and Lys255. The Helicase C-terminal domain occupies 260–421 (GLQQYYVKLK…ELPEEIDIST (162 aa)). Phosphoserine is present on Ser426.

It belongs to the DEAD box helicase family. DECD subfamily. In terms of assembly, binds ALYREF/THOC4 and DDX39B/BAT1. Interacts with the apo-AREX complex component SARNP. Interacts with MX1. Interacts with MCM3AP isoform GANP. Interacts with ECD. Interacts with PHAX; this interaction stimulates PHAX RNA binding activity. (Microbial infection) Interacts with human cytomegalovirus/HHV-5 protein UL69. Post-translationally, SUMOylated by RANBP2; SUMOylation modification affects its ability to bind RNA. In terms of tissue distribution, detected in testis, and at lower levels in brain, kidney, lung, thymus, spleen and salivary gland.

Its subcellular location is the nucleus. It localises to the cytoplasm. The catalysed reaction is ATP + H2O = ADP + phosphate + H(+). In terms of biological role, helicase that plays an essential role in mRNA export and is involved in multiple steps in RNA metabolism including alternative splicing. Regulates nuclear mRNA export to the cytoplasm through association with ECD. Also involved in spliceosomal uridine-rich small nuclear RNA (U snRNA) export by stimulating the RNA binding of adapter PHAX. Plays a role in the negative regulation of type I IFN production by increasing the nuclear retention of antiviral transcripts and thus reducing their protein expression. Independently of the interferon pathway, plays an antiviral role against alphaviruses by binding to a 5' conserved sequence element in the viral genomic RNA. This Homo sapiens (Human) protein is ATP-dependent RNA helicase DDX39A (DDX39A).